Consider the following 357-residue polypeptide: Isopentenyl-diphosphate delta-isomerase (357 aa).

13–14 (RK) lines the substrate pocket. FMN is bound by residues serine 71, 72 to 74 (SMT), serine 102, and asparagine 131. Position 102–104 (102–104 (SMR)) interacts with substrate. Glutamine 166 lines the substrate pocket. Position 167 (glutamate 167) interacts with Mg(2+). FMN is bound by residues lysine 198 and 311–312 (AR).

The protein belongs to the IPP isomerase type 2 family. In terms of assembly, homooctamer. Dimer of tetramers. The cofactor is FMN. It depends on NADPH as a cofactor. Requires Mg(2+) as cofactor.

It localises to the cytoplasm. The catalysed reaction is isopentenyl diphosphate = dimethylallyl diphosphate. Involved in the biosynthesis of isoprenoids. Catalyzes the 1,3-allylic rearrangement of the homoallylic substrate isopentenyl (IPP) to its allylic isomer, dimethylallyl diphosphate (DMAPP). The sequence is that of Isopentenyl-diphosphate delta-isomerase from Chlorobium chlorochromatii (strain CaD3).